The chain runs to 880 residues: Translation initiation factor IF-2 (880 aa).

Residues 1–251 are disordered; sequence MVDTKNPGDK…PTAKPAPAKQ (251 aa). Residues 58–79 show a composition bias toward low complexity; it reads PADAPAAPAPVAAAKPAPVRAP. Residues 115–183 are compositionally biased toward basic and acidic residues; it reads ARIRDEEERK…KRFGEEEAKK (69 aa). 2 stretches are compositionally biased toward low complexity: residues 184 to 215 and 233 to 250; these read AAAA…VAAD and AARP…APAK. Residues 376 to 547 form the tr-type G domain; the sequence is PRSPVVTVMG…ALQAELLDLK (172 aa). The G1 stretch occupies residues 385–392; that stretch reads GHVDHGKT. 385–392 is a binding site for GTP; the sequence is GHVDHGKT. The interval 410 to 414 is G2; that stretch reads GITQH. Residues 433 to 436 form a G3 region; it reads DTPG. Residues 433 to 437 and 487 to 490 contribute to the GTP site; these read DTPGH and NKID. Residues 487-490 form a G4 region; sequence NKID. A G5 region spans residues 523–525; sequence SAK.

It belongs to the TRAFAC class translation factor GTPase superfamily. Classic translation factor GTPase family. IF-2 subfamily.

It is found in the cytoplasm. One of the essential components for the initiation of protein synthesis. Protects formylmethionyl-tRNA from spontaneous hydrolysis and promotes its binding to the 30S ribosomal subunits. Also involved in the hydrolysis of GTP during the formation of the 70S ribosomal complex. The protein is Translation initiation factor IF-2 of Rhodopseudomonas palustris (strain BisB18).